The sequence spans 278 residues: Large ribosomal subunit protein uL2 (278 aa).

Positions 223–278 (RGSAMNPNDHPHGGGEGKAPVGRKAPMTPWGKKALGVKTRNKKKASTKLIVRRRTK) are disordered. The segment covering 261–278 (TRNKKKASTKLIVRRRTK) has biased composition (basic residues).

The protein belongs to the universal ribosomal protein uL2 family. In terms of assembly, part of the 50S ribosomal subunit. Forms a bridge to the 30S subunit in the 70S ribosome.

Its function is as follows. One of the primary rRNA binding proteins. Required for association of the 30S and 50S subunits to form the 70S ribosome, for tRNA binding and peptide bond formation. It has been suggested to have peptidyltransferase activity; this is somewhat controversial. Makes several contacts with the 16S rRNA in the 70S ribosome. This is Large ribosomal subunit protein uL2 from Spiroplasma kunkelii.